The following is a 561-amino-acid chain: uncharacterized protein (561 aa).

6 helical membrane-spanning segments follow: residues 27–49 (ILEFLAAQPLLTLALILAVGLLI), 54–71 (FFGISLGAAAVLFVALAL), 83–105 (LVYQLGLAMFVYAIGLSAGSEFF), 115–137 (LTLFMIGLLMLMMAVAYGIIKLF), 142–162 (IIGAGMFAGALSSTPGMAAMV), and 177–199 (VVGYSLAYPGAVIGSILVAAIGA). The region spanning 292–373 (QQDVPIEDTD…MSEVRRFLGD (82 aa)) is the RCK C-terminal domain. The next 4 membrane-spanning stretches (helical) occupy residues 383–405 (LMPFAFGLVIGLAIGVIPIPLPG), 409–428 (LSLGFGGGPIVAGLILGALN), 441–463 (ASRTISTFGLAIFLAGVGTSAGV), and 478–500 (IAGGFIVTISSALVCALVCMPLF).

This sequence belongs to the AAE transporter (TC 2.A.81) family.

It is found in the cell membrane. This is an uncharacterized protein from Corynebacterium diphtheriae (strain ATCC 700971 / NCTC 13129 / Biotype gravis).